Consider the following 343-residue polypeptide: Aspartate carbamoyltransferase catalytic subunit (343 aa).

Carbamoyl phosphate-binding residues include arginine 91 and threonine 92. Lysine 119 is a binding site for L-aspartate. Carbamoyl phosphate contacts are provided by arginine 141, histidine 171, and glutamine 174. Arginine 204 and arginine 259 together coordinate L-aspartate. Carbamoyl phosphate-binding residues include glycine 300 and proline 301.

The protein belongs to the aspartate/ornithine carbamoyltransferase superfamily. ATCase family. In terms of assembly, heterododecamer (2C3:3R2) of six catalytic PyrB chains organized as two trimers (C3), and six regulatory PyrI chains organized as three dimers (R2).

It carries out the reaction carbamoyl phosphate + L-aspartate = N-carbamoyl-L-aspartate + phosphate + H(+). It participates in pyrimidine metabolism; UMP biosynthesis via de novo pathway; (S)-dihydroorotate from bicarbonate: step 2/3. Catalyzes the condensation of carbamoyl phosphate and aspartate to form carbamoyl aspartate and inorganic phosphate, the committed step in the de novo pyrimidine nucleotide biosynthesis pathway. In Burkholderia multivorans (strain ATCC 17616 / 249), this protein is Aspartate carbamoyltransferase catalytic subunit.